Consider the following 192-residue polypeptide: Probable chorismate pyruvate-lyase (192 aa).

Residues arginine 85, leucine 120, and glutamate 176 each coordinate substrate.

The protein belongs to the UbiC family.

It localises to the cytoplasm. It carries out the reaction chorismate = 4-hydroxybenzoate + pyruvate. The protein operates within cofactor biosynthesis; ubiquinone biosynthesis. Functionally, removes the pyruvyl group from chorismate, with concomitant aromatization of the ring, to provide 4-hydroxybenzoate (4HB) for the ubiquinone pathway. This Pseudoalteromonas atlantica (strain T6c / ATCC BAA-1087) protein is Probable chorismate pyruvate-lyase.